A 953-amino-acid chain; its full sequence is Isoleucine--tRNA ligase (953 aa).

The 'HIGH' region motif lies at 57–67 (PYANGDIHIGH). Glutamate 582 is a binding site for L-isoleucyl-5'-AMP. The short motif at 623–627 (KMSKS) is the 'KMSKS' region element. Lysine 626 provides a ligand contact to ATP. Zn(2+) contacts are provided by cysteine 916, cysteine 919, cysteine 936, and cysteine 939.

Belongs to the class-I aminoacyl-tRNA synthetase family. IleS type 1 subfamily. In terms of assembly, monomer. Zn(2+) serves as cofactor.

The protein resides in the cytoplasm. The enzyme catalyses tRNA(Ile) + L-isoleucine + ATP = L-isoleucyl-tRNA(Ile) + AMP + diphosphate. Its function is as follows. Catalyzes the attachment of isoleucine to tRNA(Ile). As IleRS can inadvertently accommodate and process structurally similar amino acids such as valine, to avoid such errors it has two additional distinct tRNA(Ile)-dependent editing activities. One activity is designated as 'pretransfer' editing and involves the hydrolysis of activated Val-AMP. The other activity is designated 'posttransfer' editing and involves deacylation of mischarged Val-tRNA(Ile). In Bordetella avium (strain 197N), this protein is Isoleucine--tRNA ligase.